Reading from the N-terminus, the 212-residue chain is Redox-sensing transcriptional repressor Rex (212 aa).

The segment at residues 17–56 (LYARSLRYLLEEGIHSVSSQELGERINVTAAQIRKDLSYF) is a DNA-binding region (H-T-H motif). 91–96 (GIGLLG) serves as a coordination point for NAD(+).

This sequence belongs to the transcriptional regulatory Rex family. Homodimer.

The protein resides in the cytoplasm. In terms of biological role, modulates transcription in response to changes in cellular NADH/NAD(+) redox state. The protein is Redox-sensing transcriptional repressor Rex of Chloroflexus aggregans (strain MD-66 / DSM 9485).